The following is a 456-amino-acid chain: GTP cyclohydrolase 1 (456 aa).

Cysteine 340, histidine 343, and cysteine 412 together coordinate Zn(2+).

This sequence belongs to the GTP cyclohydrolase I family. In terms of assembly, homodimer. As to expression, expressed in leaves and unripe fruits.

The catalysed reaction is GTP + H2O = 7,8-dihydroneopterin 3'-triphosphate + formate + H(+). Its pathway is cofactor biosynthesis; 7,8-dihydroneopterin triphosphate biosynthesis; 7,8-dihydroneopterin triphosphate from GTP: step 1/1. In terms of biological role, GTP cyclohydrolase 1 is the first enzyme in the biosynthetic pathway leading to folic acid. This chain is GTP cyclohydrolase 1 (GCH1), found in Solanum lycopersicum (Tomato).